The primary structure comprises 93 residues: MPRSLKKGPYVASHLLEKIEKQKNLKNKKVIQTWSRSSMITPVFVGHKIAVYNGREHIPIYITENMVGHKLGEFFSTRTYRGHNKKDKKGQKK.

This sequence belongs to the universal ribosomal protein uS19 family.

In terms of biological role, protein S19 forms a complex with S13 that binds strongly to the 16S ribosomal RNA. This is Small ribosomal subunit protein uS19 from Phytoplasma australiense.